The primary structure comprises 268 residues: Phosphate import ATP-binding protein PstB (268 aa).

Positions 22–263 (LAVRNLNFYY…PKQQQTQDYI (242 aa)) constitute an ABC transporter domain. 54–61 (GPSGCGKS) is a binding site for ATP.

The protein belongs to the ABC transporter superfamily. Phosphate importer (TC 3.A.1.7) family. As to quaternary structure, the complex is composed of two ATP-binding proteins (PstB), two transmembrane proteins (PstC and PstA) and a solute-binding protein (PstS).

Its subcellular location is the cell inner membrane. It catalyses the reaction phosphate(out) + ATP + H2O = ADP + 2 phosphate(in) + H(+). In terms of biological role, part of the ABC transporter complex PstSACB involved in phosphate import. Responsible for energy coupling to the transport system. The chain is Phosphate import ATP-binding protein PstB from Gluconobacter oxydans (strain 621H) (Gluconobacter suboxydans).